Here is a 1418-residue protein sequence, read N- to C-terminus: Transcriptional regulator ADR1 (1418 aa).

2 stretches are compositionally biased toward low complexity: residues 34–44 (TTTTANMSNTT) and 68–93 (TSMSPSNSINSTNNNAAAAAATTTTS). A disordered region spans residues 34–96 (TTTTANMSNT…AATTTTSKKS (63 aa)). C2H2-type zinc fingers lie at residues 117-139 (FVCQVCTRAFARLEHLRRHERSH) and 145-168 (FSCGVCQRKFSRRDLLLRHAQKLH). Disordered regions lie at residues 181 to 285 (KSIK…LDQR), 403 to 426 (SQHGSFSHQSTFSATDMGQTRSES), 454 to 484 (VAAHHHHQQQQQHQQHNHQHQPNQSSLGLSR), 1132 to 1167 (NSNSRNRSKNDPTNEINNKLNNNNNNNNDMNNNNSN), and 1338 to 1362 (TNTNTTNTITTTTTTDNGTKQNQHH). Positions 189–211 (GDDDDDDDDDDEEMANSEDENDH) are enriched in acidic residues. Polar residues predominate over residues 236–278 (NLFNSKQKPTKANTTKSKVAKLSTTTSRKNSTNPTRKNSSSLH). 3 stretches are compositionally biased toward low complexity: residues 462-477 (QQQQHQQHNHQHQPNQ), 1145-1167 (NEINNKLNNNNNNNNDMNNNNSN), and 1338-1356 (TNTNTTNTITTTTTTDNGT).

The protein resides in the nucleus. Transcription factor involved in the regulation of hyphal growth. The polypeptide is Transcriptional regulator ADR1 (ADR1) (Candida albicans (strain SC5314 / ATCC MYA-2876) (Yeast)).